Reading from the N-terminus, the 1129-residue chain is MSSSRPANSSSNPGRANQNARVVLTTLDAKIHADFEESGNSFDYSSSVRVTSAVGENSSIQSNKLTTAYLHHIQKGKLIQPVGCLLAVDEKSFKIMAYSENAPEMLTMVSHAVPSVGEHPVLGIGTDVRTIFTAPSAAALQKAVGFTDINLLNPILVHCKTSGKPFYAIAHRVTGSLIIDFEPVKPYEVPMTAAGALQSYKLASKAVNRLQALPGGSMERLCDTMVQEVFELTGYDRVMAYKFHDDDHGEVTAEVTKPGLEPYFGLHYPATDVPQAARFLFLKNKVRMICDCRANSAPVLQDEKLPFELTLCGSTLRAPHSCHLQYMENMNSIASLVMAVVINDSDEVVESSDRNSVKSKKLWGLVVCHNTSPRFVPFPLRYACEFLAQVFAIHVSKELELENQIVEKNILRTQTLLCDLLMRDAPLGIVSQSPNMMDLVKCDGAALLYKNKVYRLGATPSDYQLRDIVSWLTEYHTDSTGLSTDSLYDAGYPGALALGDVVCGMAVVKITSHDMLFWFRSHAAGHIRWGGAKAEPDENHDGRKMHPRSSFKAFLEVVKTRSTTWKEFEMDAIHSLQLILRKALSVEKAVAAQGDEIRSNTDVIHTKLNDLKIEGIQELEAVTSEMVRLIETATVPIFAVDADEIVNGWNTKIAELTGLPVDQAMGKHLLTLVEDSSVGTVVFLLALALQGKEEQGIPFEFKTYGSREDSVPITVVVNACATRGLHDNVVGVCFVAQDVTSQKTIMDKFTRIQGDYKAIVQNPNPLIPPIFGTDEFGWCSEWNQAMTELSGWRREDVMNKMLLGEIFGIQTSCCHLKSKEAFVNLGVVLNNALTGQISEKICFSFFATDGKYVECLLCASKKLHGEGTVTGIFCFLQLASQELQQALHIQRLTEQTAMKRLKTLSYLRRQAKNPLCGINFVREKLEEIGMGEEQTKLFRTSVHCQRHVNKILDDTDLDSIIDGYLDLEMSEFRLHDVYVASRSQVSMRSNGKAIQVVDNFSEEMMSETLYGDSLRLQKVLADFMSVCVNLTPVGGHLGISVTLTEDNLGQSVQLVHLEFRITHTGAGVPEEAVSQMFGSDSETSEEGISLLISRKLVKLMNGDVHYLREAGKSTFIITVELAAASKRES.

One can recognise a GAF domain in the interval 217 to 399 (SMERLCDTMV…VFAIHVSKEL (183 aa)). Cys322 is a phytochromobilin binding site. 2 PAS domains span residues 622–692 (VTSE…LQGK) and 755–826 (DYKA…VNLG). A Histidine kinase domain is found at 906-1123 (YLRRQAKNPL…TFIITVELAA (218 aa)).

This sequence belongs to the phytochrome family. Homodimer. Post-translationally, contains one covalently linked phytochromobilin chromophore.

Regulatory photoreceptor which exists in two forms that are reversibly interconvertible by light: the Pr form that absorbs maximally in the red region of the spectrum and the Pfr form that absorbs maximally in the far-red region. Photoconversion of Pr to Pfr induces an array of morphogenic responses, whereas reconversion of Pfr to Pr cancels the induction of those responses. Pfr controls the expression of a number of nuclear genes including those encoding the small subunit of ribulose-bisphosphate carboxylase, chlorophyll A/B binding protein, protochlorophyllide reductase, rRNA, etc. It also controls the expression of its own gene(s) in a negative feedback fashion. The chain is Phytochrome A (PHYA) from Petroselinum crispum (Parsley).